Consider the following 390-residue polypeptide: Endonuclease 8-like 1 (390 aa).

Catalysis depends on proline 2, which acts as the Schiff-base intermediate with DNA. Glutamate 3 (proton donor) is an active-site residue. Lysine 54 serves as the catalytic Proton donor; for beta-elimination activity. Residue asparagine 176 coordinates DNA. The segment at 278-390 (TIWFQGDPGP…SLEPEGTSAS (113 aa)) is disordered. A compositionally biased stretch (basic residues) spans 291 to 301 (KGRKSRKKKSK). Polar residues predominate over residues 335-347 (TATQRPEGTSLQQ). Residue arginine 339 participates in DNA binding. Arginine 339 (proton donor; for delta-elimination activity) is an active-site residue.

The protein belongs to the FPG family. In terms of tissue distribution, ubiquitous.

Its subcellular location is the cytoplasm. The protein resides in the cytoskeleton. The protein localises to the microtubule organizing center. It is found in the centrosome. It localises to the nucleus. Its subcellular location is the chromosome. It carries out the reaction 2'-deoxyribonucleotide-(2'-deoxyribose 5'-phosphate)-2'-deoxyribonucleotide-DNA = a 3'-end 2'-deoxyribonucleotide-(2,3-dehydro-2,3-deoxyribose 5'-phosphate)-DNA + a 5'-end 5'-phospho-2'-deoxyribonucleoside-DNA + H(+). In terms of biological role, involved in base excision repair of DNA damaged by oxidation or by mutagenic agents. Acts as a DNA glycosylase that recognizes and removes damaged bases. Has a preference for oxidized pyrimidines, such as thymine glycol, formamidopyrimidine (Fapy) and 5-hydroxyuracil. Has marginal activity towards 8-oxoguanine. Has AP (apurinic/apyrimidinic) lyase activity and introduces nicks in the DNA strand. Cleaves the DNA backbone by beta-delta elimination to generate a single-strand break at the site of the removed base with both 3'- and 5'-phosphates. Has DNA glycosylase/lyase activity towards mismatched uracil and thymine, in particular in U:C and T:C mismatches. Specifically binds 5-hydroxymethylcytosine (5hmC), suggesting that it acts as a specific reader of 5hmC. The chain is Endonuclease 8-like 1 (NEIL1) from Homo sapiens (Human).